The chain runs to 471 residues: MKVTQEKLPDSQVGLEIEIPATASKKVYENVVKKLTRTVNIPGFRRGKVPRAIVIQRLGQSYIKATAIEELIDDSIKAAVKQEELPIIGNFSLRSDMENLIQIFDPEAPLTIKVAADVFPEAEYEPESYKKITAQAEEIEYSADAVDQWLKGEQEKRATLVPVEDRPAALGDLAIVDYAAFQVAEDGQAGEAIAEVKGSDFEVTLEDGRFVAGIVDGIVGMAVDETKLIPVTFPEDYPLEAVAGEDVLFEIKLKEIKFRELPELDDDFAEDVSEFETMAELKADLEKQFQEQAKQRTDDNIKAAIKKKLGELFTGDLPETMIKQECDRLVAQTAMELERMGLDVSQLFRQGDDMLQTLKDNSRPEAIANLKTDLMIGAIAKEEKIQPTEAEVKERCDELRQEFKGEKIDESRLVNFVESSLTESKVLDLLKEWADVELLPEGSLSQTEEDTPDDDAEEEAIVDVEATSDEE.

The PPIase FKBP-type domain maps to 171 to 262 (GDLAIVDYAA…LKEIKFRELP (92 aa)). A disordered region spans residues 440 to 471 (PEGSLSQTEEDTPDDDAEEEAIVDVEATSDEE). Acidic residues predominate over residues 447–471 (TEEDTPDDDAEEEAIVDVEATSDEE).

Belongs to the FKBP-type PPIase family. Tig subfamily.

It localises to the cytoplasm. It carries out the reaction [protein]-peptidylproline (omega=180) = [protein]-peptidylproline (omega=0). Involved in protein export. Acts as a chaperone by maintaining the newly synthesized protein in an open conformation. Functions as a peptidyl-prolyl cis-trans isomerase. The protein is Trigger factor (tig) of Synechocystis sp. (strain ATCC 27184 / PCC 6803 / Kazusa).